The sequence spans 117 residues: Protein GL2-INTERACTING REPRESSOR 2 (117 aa).

Residues 1–56 form a disordered region; it reads MSRRNKNGPKLELRLNLSPPPSQASQMSLVRSPNRSNTTSPSSCVSSETNQEENET. The EAR motif lies at 10-15; it reads KLELRL. The span at 31-49 shows a compositional bias: low complexity; that stretch reads RSPNRSNTTSPSSCVSSET.

Interacts with GL2. Interacts with TPL.

It localises to the nucleus. Functionally, acts as a negative regulator of root hair development redundantly with GIR1. GIR1 and GIR2 may function as adapter proteins that associate with GL2 and participate in the control of root hair formation. GIR1 and GIR2 may function as adapter proteins that associate with TPL and participate in the repression of root gene expression. This is Protein GL2-INTERACTING REPRESSOR 2 from Arabidopsis thaliana (Mouse-ear cress).